The primary structure comprises 562 residues: Pentatricopeptide repeat-containing protein At3g22670, mitochondrial (562 aa).

The N-terminal 31 residues, 1-31 (MLTKLRISKLVSYTLPRRIFQRRFLVTNNTA), are a transit peptide targeting the mitochondrion. PPR repeat units follow at residues 165–199 (SGHT…EESK), 202–232 (TLDT…MEKS), 238–268 (DTIA…LFDT), 272–306 (DART…EFTP), 307–341 (DVVT…GCNP), 342–376 (NVVT…GCVP), 377–411 (DAKF…GVRR), 412–446 (DVLV…EGES), 450–484 (NVET…DVSI), and 485–519 (DVST…GMVP).

This sequence belongs to the PPR family. P subfamily.

Its subcellular location is the mitochondrion. This is Pentatricopeptide repeat-containing protein At3g22670, mitochondrial from Arabidopsis thaliana (Mouse-ear cress).